A 279-amino-acid chain; its full sequence is Protein BASIC PENTACYSTEINE2 (279 aa).

A disordered region spans residues 126 to 167 (TKKRKTNAKAGSTPKAKKPRKPKDENSNNNNNNNTNVTRVKP). The segment covering 152–161 (SNNNNNNNTN) has biased composition (low complexity).

Belongs to the BBR/BPC family. As to expression, expressed in seedlings, leaves and pistils. Detected in the base of flowers and tips of carpels, in sepal and petal vasculature, in pollen grains, in young rosette, in the lateral and tip of primary roots, and in ovule at the exception of the outer integument.

The protein localises to the nucleus. Transcriptional regulator that specifically binds to GA-rich elements (GAGA-repeats) present in regulatory sequences of genes involved in developmental processes. This Arabidopsis thaliana (Mouse-ear cress) protein is Protein BASIC PENTACYSTEINE2.